Here is a 388-residue protein sequence, read N- to C-terminus: UDP-4-amino-4-deoxy-L-arabinose--oxoglutarate aminotransferase (388 aa).

Residue Lys183 is modified to N6-(pyridoxal phosphate)lysine.

It belongs to the DegT/DnrJ/EryC1 family. ArnB subfamily. Homodimer. Requires pyridoxal 5'-phosphate as cofactor.

It carries out the reaction UDP-4-amino-4-deoxy-beta-L-arabinose + 2-oxoglutarate = UDP-beta-L-threo-pentopyranos-4-ulose + L-glutamate. It functions in the pathway nucleotide-sugar biosynthesis; UDP-4-deoxy-4-formamido-beta-L-arabinose biosynthesis; UDP-4-deoxy-4-formamido-beta-L-arabinose from UDP-alpha-D-glucuronate: step 2/3. The protein operates within bacterial outer membrane biogenesis; lipopolysaccharide biosynthesis. Catalyzes the conversion of UDP-4-keto-arabinose (UDP-Ara4O) to UDP-4-amino-4-deoxy-L-arabinose (UDP-L-Ara4N). The modified arabinose is attached to lipid A and is required for resistance to polymyxin and cationic antimicrobial peptides. The protein is UDP-4-amino-4-deoxy-L-arabinose--oxoglutarate aminotransferase of Shewanella sediminis (strain HAW-EB3).